The primary structure comprises 107 residues: L-rhamnose mutarotase (107 aa).

Tyr-21 serves as a coordination point for substrate. His-25 functions as the Proton donor in the catalytic mechanism. Substrate contacts are provided by residues Tyr-44 and 79 to 80 (WW).

Belongs to the rhamnose mutarotase family. As to quaternary structure, homodimer.

It is found in the cytoplasm. The enzyme catalyses alpha-L-rhamnose = beta-L-rhamnose. The protein operates within carbohydrate metabolism; L-rhamnose metabolism. In terms of biological role, involved in the anomeric conversion of L-rhamnose. The sequence is that of L-rhamnose mutarotase from Agrobacterium fabrum (strain C58 / ATCC 33970) (Agrobacterium tumefaciens (strain C58)).